The primary structure comprises 496 residues: N-succinylglutamate 5-semialdehyde dehydrogenase (496 aa).

229–234 (GSYATG) is a binding site for NAD(+). Catalysis depends on residues glutamate 252 and cysteine 286.

The protein belongs to the aldehyde dehydrogenase family. AstD subfamily.

It catalyses the reaction N-succinyl-L-glutamate 5-semialdehyde + NAD(+) + H2O = N-succinyl-L-glutamate + NADH + 2 H(+). The protein operates within amino-acid degradation; L-arginine degradation via AST pathway; L-glutamate and succinate from L-arginine: step 4/5. Functionally, catalyzes the NAD-dependent reduction of succinylglutamate semialdehyde into succinylglutamate. The protein is N-succinylglutamate 5-semialdehyde dehydrogenase of Legionella pneumophila subsp. pneumophila (strain Philadelphia 1 / ATCC 33152 / DSM 7513).